The chain runs to 69 residues: Probable molybdenum-pterin-binding protein (69 aa).

The Mop domain maps to 2-68; it reads KISARNQLKG…IKATSVMVGV (67 aa).

This sequence to C.pasteurianum MOP proteins.

Functionally, binds one mole of molybdenum per mole of protein and contains a pterin. This is Probable molybdenum-pterin-binding protein from Haemophilus influenzae (strain ATCC 51907 / DSM 11121 / KW20 / Rd).